A 266-amino-acid polypeptide reads, in one-letter code: Glucosamine-6-phosphate deaminase (266 aa).

The Proton acceptor; for enolization step role is filled by Asp-72. Asp-141 (for ring-opening step) is an active-site residue. His-143 (proton acceptor; for ring-opening step) is an active-site residue. The active-site For ring-opening step is the Glu-148.

The protein belongs to the glucosamine/galactosamine-6-phosphate isomerase family. NagB subfamily. As to quaternary structure, homohexamer.

It catalyses the reaction alpha-D-glucosamine 6-phosphate + H2O = beta-D-fructose 6-phosphate + NH4(+). It functions in the pathway amino-sugar metabolism; N-acetylneuraminate degradation; D-fructose 6-phosphate from N-acetylneuraminate: step 5/5. Allosterically activated by N-acetylglucosamine 6-phosphate (GlcNAc6P). Catalyzes the reversible isomerization-deamination of glucosamine 6-phosphate (GlcN6P) to form fructose 6-phosphate (Fru6P) and ammonium ion. The chain is Glucosamine-6-phosphate deaminase from Edwardsiella ictaluri (strain 93-146).